The primary structure comprises 452 residues: Pup--protein ligase (452 aa).

Glu9 provides a ligand contact to Mg(2+). Arg53 contributes to the ATP binding site. Mg(2+) is bound at residue Tyr55. Asp57 functions as the Proton acceptor in the catalytic mechanism. Glu63 contacts Mg(2+). Residues Thr66 and Trp419 each contribute to the ATP site.

The protein belongs to the Pup ligase/Pup deamidase family. Pup-conjugating enzyme subfamily.

The catalysed reaction is ATP + [prokaryotic ubiquitin-like protein]-L-glutamate + [protein]-L-lysine = ADP + phosphate + N(6)-([prokaryotic ubiquitin-like protein]-gamma-L-glutamyl)-[protein]-L-lysine.. Its pathway is protein degradation; proteasomal Pup-dependent pathway. The protein operates within protein modification; protein pupylation. In terms of biological role, catalyzes the covalent attachment of the prokaryotic ubiquitin-like protein modifier Pup to the proteasomal substrate proteins, thereby targeting them for proteasomal degradation. This tagging system is termed pupylation. The ligation reaction involves the side-chain carboxylate of the C-terminal glutamate of Pup and the side-chain amino group of a substrate lysine. In Mycolicibacterium vanbaalenii (strain DSM 7251 / JCM 13017 / BCRC 16820 / KCTC 9966 / NRRL B-24157 / PYR-1) (Mycobacterium vanbaalenii), this protein is Pup--protein ligase.